We begin with the raw amino-acid sequence, 365 residues long: Palmitoyltransferase ZDHHC20 (365 aa).

Over 1–14 (MAPWTLWRCCQRVV) the chain is Cytoplasmic. The chain crosses the membrane as a helical span at residues 15 to 35 (GWVPVLFITFVVVWSYYAYVV). The Lumenal segment spans residues 36–53 (ELCVFTIFGNEENGKTVV). Residues 54-74 (YLVAFHLFFVMFVWSYWMTIF) form a helical membrane-spanning segment. The Cytoplasmic portion of the chain corresponds to 75–169 (TSPASPSKEF…NNCVGFSNYK (95 aa)). Residues 126 to 176 (RYCEKCQLIKPDRAHHCSACDSCILKMDHHCPWVNNCVGFSNYKFFLLFLL) form the DHHC domain. Cys128 and Cys131 together coordinate Zn(2+). Substrate-binding positions include Lys135 and 140–143 (HHCS). Residues His141, Cys142, Cys145, Cys148, and His155 each coordinate Zn(2+). The S-palmitoyl cysteine intermediate role is filled by Cys156. Residue Cys162 coordinates Zn(2+). The helical transmembrane segment at 170–190 (FFLLFLLYSLLYCLFVAATVL) threads the bilayer. At 191–207 (EYFIKFWTNELTDTRAK) the chain is on the lumenal side. Residues 208 to 231 (FHVLFLFFVSAMFFISVLSLFSYH) traverse the membrane as a helical segment. The Cytoplasmic portion of the chain corresponds to 232–365 (CWLVGKNRTT…NNHVTVAIEN (134 aa)). Residues Ser305, Ser330, and Ser339 each carry the phosphoserine modification.

It belongs to the DHHC palmitoyltransferase family. Post-translationally, autopalmitoylated (in vitro).

It is found in the golgi apparatus membrane. Its subcellular location is the cell membrane. It localises to the cytoplasm. The protein localises to the perinuclear region. The protein resides in the endoplasmic reticulum membrane. It is found in the endoplasmic reticulum-Golgi intermediate compartment membrane. The catalysed reaction is L-cysteinyl-[protein] + hexadecanoyl-CoA = S-hexadecanoyl-L-cysteinyl-[protein] + CoA. It catalyses the reaction L-cysteinyl-[protein] + tetradecanoyl-CoA = S-tetradecanoyl-L-cysteinyl-[protein] + CoA. It carries out the reaction L-cysteinyl-[protein] + octadecanoyl-CoA = S-octadecanoyl-L-cysteinyl-[protein] + CoA. Functionally, palmitoyltransferase that could catalyze the addition of palmitate onto various protein substrates. Catalyzes palmitoylation of Cys residues in the cytoplasmic C-terminus of EGFR, and modulates the duration of EGFR signaling by modulating palmitoylation-dependent EGFR internalization and degradation. Has a preference for acyl-CoA with C16 fatty acid chains. Can also utilize acyl-CoA with C14 and C18 fatty acid chains. May palmitoylate CALHM1 subunit of gustatory voltage-gated ion channels and modulate channel gating and kinetics. (Microbial infection) Dominant palmitoyltransferase responsible for lipidation of SARS coronavirus-2/SARS-CoV-2 spike protein. Through a sequential action with ZDHHC9, rapidly and efficiently palmitoylates spike protein following its synthesis in the endoplasmic reticulum (ER). In the infected cell, promotes spike biogenesis by protecting it from premature ER degradation, increases half-life and controls the lipid organization of its immediate membrane environment. Once the virus has formed, spike palmitoylation controls fusion with the target cell. The chain is Palmitoyltransferase ZDHHC20 from Homo sapiens (Human).